A 249-amino-acid polypeptide reads, in one-letter code: Uridylate kinase (249 aa).

Lys19–Gly22 contacts ATP. Gly61 contacts UMP. 2 residues coordinate ATP: Gly62 and Arg66. UMP-binding positions include Asp81 and Thr142–Thr149. Thr169, Tyr175, and Asp178 together coordinate ATP.

This sequence belongs to the UMP kinase family. In terms of assembly, homohexamer.

The protein resides in the cytoplasm. The enzyme catalyses UMP + ATP = UDP + ADP. Its pathway is pyrimidine metabolism; CTP biosynthesis via de novo pathway; UDP from UMP (UMPK route): step 1/1. Its activity is regulated as follows. Inhibited by UTP. Its function is as follows. Catalyzes the reversible phosphorylation of UMP to UDP. The protein is Uridylate kinase of Anaeromyxobacter sp. (strain Fw109-5).